Here is a 299-residue protein sequence, read N- to C-terminus: MSATGDRHPTQGDQEAPVSQEGAQAEAAGAGNQEGGDSGPDSSDMVPAAEVVGVAGPVEGLGEEEGEQAAGLAAVPQGGSAEEDSDIGPATEEEEEEEEGNEAANFDLAVATRRYPAAGIGFVFLYLVHSLLRRLYHNDHIQIANRHLSRLMVGPHAAVPNLWDNPPLLLLSQRLGAGAAAPEGEGLGLIQEAASVQEAASVPEPAVPADLAEMAREPAEEAADEKPPEEAAEEKLTEEATEEPAAEEPTSEEAVAPEEVTKSQPEKWDEEAQDAAGEEEKEQEKEKDVENKVKNSKGT.

A compositionally biased stretch (basic and acidic residues) spans 1–10; the sequence is MSATGDRHPT. Disordered stretches follow at residues 1–102 and 215–299; these read MSAT…EGNE and AREP…SKGT. 2 stretches are compositionally biased toward low complexity: residues 20–31 and 46–60; these read QEGAQAEAAGAG and VPAA…PVEG. Residues 81–101 are compositionally biased toward acidic residues; sequence AEEDSDIGPATEEEEEEEEGN. Positions 215–238 are enriched in basic and acidic residues; sequence AREPAEEAADEKPPEEAAEEKLTE. Composition is skewed to acidic residues over residues 239 to 251 and 268 to 281; these read EATE…EPTS and WDEE…EEEK. Positions 270 to 298 form a coiled coil; that stretch reads EEAQDAAGEEEKEQEKEKDVENKVKNSKG. The span at 282-293 shows a compositional bias: basic and acidic residues; the sequence is EQEKEKDVENKV.

Belongs to the CT47 family.

The sequence is that of Cancer/testis antigen family 47 member B1 from Homo sapiens (Human).